A 121-amino-acid chain; its full sequence is MPGMSRHNQSVGAYGERCALRHLITAGLRPVARNWRCPHGEIDIIAWDGPVLAICEVKTRRTDTFGTPTAAVTGTKARRLRLLAARWLAETGTRADEVRFDVLSIRLTGGPPHVEHLKGAF.

The protein belongs to the UPF0102 family.

The sequence is that of UPF0102 protein Strop_1320 from Salinispora tropica (strain ATCC BAA-916 / DSM 44818 / JCM 13857 / NBRC 105044 / CNB-440).